The chain runs to 283 residues: NAD(P)H-hydrate epimerase (283 aa).

The N-terminal 28 residues, 1–28, are a transit peptide targeting the mitochondrion; it reads MLGVRALFGIGLLVTSRGGFVLTHTRAC. One can recognise a YjeF N-terminal domain in the interval 61 to 270; it reads AQQIDEELFS…VLEQKYQLNL (210 aa). Residue 115–119 participates in (6S)-NADPHX binding; it reads NNGGD. Positions 116 and 180 each coordinate K(+). Residues 184–190 and aspartate 213 contribute to the (6S)-NADPHX site; that span reads GFSFKGA. Serine 216 contributes to the K(+) binding site.

Belongs to the NnrE/AIBP family. Homodimer. Interacts with apoa1a. Binds to high-density lipoprotein. It depends on K(+) as a cofactor.

The protein resides in the mitochondrion. It localises to the secreted. The enzyme catalyses (6R)-NADHX = (6S)-NADHX. It carries out the reaction (6R)-NADPHX = (6S)-NADPHX. Catalyzes the epimerization of the S- and R-forms of NAD(P)HX, a damaged form of NAD(P)H that is a result of enzymatic or heat-dependent hydration. This is a prerequisite for the S-specific NAD(P)H-hydrate dehydratase to allow the repair of both epimers of NAD(P)HX. The chain is NAD(P)H-hydrate epimerase from Danio rerio (Zebrafish).